The primary structure comprises 333 residues: Lipoyl synthase (333 aa).

Residues 1-15 (MSTLVESPVPSNDSQ) are compositionally biased toward polar residues. The disordered stretch occupies residues 1–34 (MSTLVESPVPSNDSQAAAPAAYDPTQKQKSQAKT). Residues C80, C85, C91, C106, C110, C113, and S320 each coordinate [4Fe-4S] cluster. Residues 91-309 (CFGKGTATFM…EREAYAMGFT (219 aa)) form the Radical SAM core domain.

This sequence belongs to the radical SAM superfamily. Lipoyl synthase family. It depends on [4Fe-4S] cluster as a cofactor.

It localises to the cytoplasm. The enzyme catalyses [[Fe-S] cluster scaffold protein carrying a second [4Fe-4S](2+) cluster] + N(6)-octanoyl-L-lysyl-[protein] + 2 oxidized [2Fe-2S]-[ferredoxin] + 2 S-adenosyl-L-methionine + 4 H(+) = [[Fe-S] cluster scaffold protein] + N(6)-[(R)-dihydrolipoyl]-L-lysyl-[protein] + 4 Fe(3+) + 2 hydrogen sulfide + 2 5'-deoxyadenosine + 2 L-methionine + 2 reduced [2Fe-2S]-[ferredoxin]. It functions in the pathway protein modification; protein lipoylation via endogenous pathway; protein N(6)-(lipoyl)lysine from octanoyl-[acyl-carrier-protein]: step 2/2. In terms of biological role, catalyzes the radical-mediated insertion of two sulfur atoms into the C-6 and C-8 positions of the octanoyl moiety bound to the lipoyl domains of lipoate-dependent enzymes, thereby converting the octanoylated domains into lipoylated derivatives. This chain is Lipoyl synthase, found in Bordetella bronchiseptica (strain ATCC BAA-588 / NCTC 13252 / RB50) (Alcaligenes bronchisepticus).